The sequence spans 781 residues: Tax1-binding protein 1 homolog A (781 aa).

Coiled coils occupy residues 148–453 and 488–581; these read NSDI…QGDA and DVEK…YMRE. Residues 441–465 show a composition bias toward polar residues; sequence KLTQQQETQQGDANRNDASTETTLE. Disordered regions lie at residues 441–510 and 630–691; these read KLTQ…EEEC and ETRD…EAPA. Residues 484-495 are compositionally biased toward basic and acidic residues; the sequence is TVARDVEKSRDE. Over residues 496-510 the composition is skewed to acidic residues; the sequence is EGNEQEEEDEEEEEC. Positions 646–656 are enriched in pro residues; the sequence is RPPPLAPPPWG. UBZ1-type zinc fingers lie at residues 716-742 and 743-769; these read HKQC…VESH and WRVC…VHTH. The Zn(2+) site is built by cysteine 719, cysteine 722, histidine 738, histidine 742, cysteine 746, cysteine 749, histidine 765, and histidine 769.

In terms of tissue distribution, little expression is observed during pectoral fin development, except for an elevated level of expression in the distal mesenchyme cells of some samples.

In terms of biological role, may have anti-apoptotic activity. The sequence is that of Tax1-binding protein 1 homolog A from Danio rerio (Zebrafish).